The chain runs to 300 residues: Shikimate kinase, chloroplastic (300 aa).

Residues 1–65 (MEARVSQSLQ…SDRRVQLKVS (65 aa)) constitute a chloroplast transit peptide. 111-118 (GMMGCGKT) contacts ATP. Residue Thr-118 coordinates Mg(2+). Asp-136, Arg-161, and Gly-183 together coordinate substrate. Residue Arg-222 participates in ATP binding.

This sequence belongs to the shikimate kinase family. Mg(2+) serves as cofactor.

Its subcellular location is the plastid. It is found in the chloroplast. The catalysed reaction is shikimate + ATP = 3-phosphoshikimate + ADP + H(+). The protein operates within metabolic intermediate biosynthesis; chorismate biosynthesis; chorismate from D-erythrose 4-phosphate and phosphoenolpyruvate: step 5/7. Functionally, catalyzes the specific phosphorylation of the 3-hydroxyl group of shikimic acid using ATP as a cosubstrate. The protein is Shikimate kinase, chloroplastic (SK) of Solanum lycopersicum (Tomato).